A 455-amino-acid chain; its full sequence is Nucleoprotein (455 aa).

Positions 1 to 62 (MSFVPGQENA…ATTQPNSGSV (62 aa)) are disordered. A compositionally biased stretch (low complexity) spans 9 to 23 (NAGSRSSSGNRAGNG). Composition is skewed to polar residues over residues 30 to 42 (WADQ…NNQN) and 49 to 61 (PKQT…NSGS). Residues 56–197 (QPNSGSVVPH…GFYVEGSGRS (142 aa)) are RNA-binding. A CoV N NTD domain is found at 64–193 (PHYSWFSGIT…VLPQGFYVEG (130 aa)). Positions 109, 125, and 167 each coordinate RNA. Disordered stretches follow at residues 159 to 230 (RTSA…STVK), 271 to 290 (PRQK…FGKR), and 382 to 429 (QDGG…RELT). Ser170 bears the Phosphoserine; by host mark. Phosphothreonine; by host is present on Thr177. A compositionally biased stretch (low complexity) spans 193–212 (GSGRSAPASRSGSRPQSRGP). Ser194 is subject to Phosphoserine; by host. Positions 215–227 (RARSSSNQRQPAS) are enriched in polar residues. In terms of domain architecture, CoV N CTD spans 260–383 (AKEVRQKILN…ENLNAYQNQD (124 aa)). Residues 267–384 (ILNKPRQKRT…NLNAYQNQDG (118 aa)) are dimerization. Ser390 bears the Phosphoserine; by host mark. Positions 393 to 402 (PQRKRGTKQK) are enriched in basic residues. Ser425 is subject to Phosphoserine; by host. The residue at position 429 (Thr429) is a Phosphothreonine; by host.

The protein belongs to the betacoronavirus nucleocapsid protein family. In terms of assembly, homooligomer. Both monomeric and oligomeric forms interact with RNA. Interacts with protein M. Interacts with NSP3; this interaction serves to tether the genome to the newly translated replicase-transcriptase complex at a very early stage of infection. Interacts (when phosphorylated) with host DDX1; this interaction is essential to produce a full set of subgenomic and genomic RNAs. ADP-ribosylated. The ADP-ribosylation is retained in the virion during infection. Post-translationally, phosphorylated on serine and threonine residues. Phosphorylated by host GSK3A and GSK3B. Phosphorylation allows recruitment of host RNA helicase DDX1 which facilitates template readthrough and enables longer subgenomic mRNA synthesis.

Its subcellular location is the virion. The protein resides in the host endoplasmic reticulum-Golgi intermediate compartment. It localises to the host Golgi apparatus. Its function is as follows. Packages the positive strand viral genome RNA into a helical ribonucleocapsid (RNP) and plays a fundamental role during virion assembly through its interactions with the viral genome and membrane protein M. Plays an important role in enhancing the efficiency of subgenomic viral RNA transcription as well as viral replication. The chain is Nucleoprotein from Murine coronavirus (strain JHM) (MHV-JHM).